The following is a 229-amino-acid chain: Cytidylate kinase (229 aa).

12 to 20 (GPSGSGKGT) is an ATP binding site.

The protein belongs to the cytidylate kinase family. Type 1 subfamily.

The protein resides in the cytoplasm. The enzyme catalyses CMP + ATP = CDP + ADP. The catalysed reaction is dCMP + ATP = dCDP + ADP. The polypeptide is Cytidylate kinase (Stutzerimonas stutzeri (strain A1501) (Pseudomonas stutzeri)).